The primary structure comprises 334 residues: Heat-inducible transcription repressor HrcA (334 aa).

This sequence belongs to the HrcA family.

In terms of biological role, negative regulator of class I heat shock genes (grpE-dnaK-dnaJ and groELS operons). Prevents heat-shock induction of these operons. This Paracidovorax citrulli (strain AAC00-1) (Acidovorax citrulli) protein is Heat-inducible transcription repressor HrcA.